Here is a 233-residue protein sequence, read N- to C-terminus: Protein Atu3128 (233 aa).

It belongs to the glycosyl hydrolase 88 family.

In terms of biological role, seems to regulate the surface properties of the bacterium in the presence of plant cells or plant cell extracts. Mutations in this protein are responsible for an increased aggregation of the bacteria in the presence of pea root cap cells. The chain is Protein Atu3128 from Agrobacterium fabrum (strain C58 / ATCC 33970) (Agrobacterium tumefaciens (strain C58)).